We begin with the raw amino-acid sequence, 408 residues long: Histidine--tRNA ligase (408 aa).

This sequence belongs to the class-II aminoacyl-tRNA synthetase family. Homodimer.

The protein localises to the cytoplasm. It carries out the reaction tRNA(His) + L-histidine + ATP = L-histidyl-tRNA(His) + AMP + diphosphate + H(+). This Campylobacter lari (strain RM2100 / D67 / ATCC BAA-1060) protein is Histidine--tRNA ligase.